Consider the following 200-residue polypeptide: 2-phospho-L-lactate guanylyltransferase (200 aa).

This sequence belongs to the CofC family. As to quaternary structure, homodimer.

The enzyme catalyses (2S)-2-phospholactate + GTP + H(+) = (2S)-lactyl-2-diphospho-5'-guanosine + diphosphate. The protein operates within cofactor biosynthesis; coenzyme F420 biosynthesis. In terms of biological role, guanylyltransferase that catalyzes the activation of (2S)-2-phospholactate (2-PL) as (2S)-lactyl-2-diphospho-5'-guanosine, via the condensation of 2-PL with GTP. It is involved in the biosynthesis of coenzyme F420, a hydride carrier cofactor. This Ferroglobus placidus (strain DSM 10642 / AEDII12DO) protein is 2-phospho-L-lactate guanylyltransferase.